A 200-amino-acid chain; its full sequence is Small heat shock protein hspG2 (200 aa).

One can recognise a sHSP domain in the interval 33-200 (NKRIDIIPSM…DNFQIKLKSI (168 aa)). The disordered stretch occupies residues 86–139 (KLQQQQQQQSEKSSQSTNNKDDDEPSIEEYEDDTKLKSNLNKNTENKDENKTTS). Residues 88–101 (QQQQQQQSEKSSQS) are compositionally biased toward low complexity. Residues 106 to 117 (DDDEPSIEEYED) are compositionally biased toward acidic residues.

This sequence belongs to the small heat shock protein (HSP20) family.

This Dictyostelium discoideum (Social amoeba) protein is Small heat shock protein hspG2 (hspG2).